The primary structure comprises 479 residues: MMKMKQQGLVADLLPNIRVMKFFGHFVFNYYDDNSSKYLHKIFCCVNLFLLLLQFALCAVNLIIESADVDDLTANTITLLFFTHSIVKIIYFAVRSKYFYRTWAIWNNPNSHPLFAESNARYHAIALKKMRLLLFLVGATTVLSAIAWTVLTFFEHPIRKLVDPVTNETTIIELPQLLLRSYYPFDASKGIMHVIVLIYQFYWVLFMLIDANSLDVLFCSWLLFACEQLQHLKQIMKPLMELSATLDTVVPNSSELFKAGSAEHLRESENQPPPPVPPQGDSMLDLDLRNIYSNRQDFTATFRPTAGMTFNGGVGPNGLTKKQEMLVRSAIKYWVERHKHIVRLVTAVGDAYGFALLLHMLTTTITLTLLAYQATKVNGVNVYAASTIGYIIYTFGQVFLFCIFGNRLIEESTSVMEAAYSCHWYDGSEEAKTFVQIVCQQCQKAMSISGAKFFTVSLDLFASVLGAVVTYFMVLVQLK.

Topologically, residues 1 to 43 are cytoplasmic; it reads MMKMKQQGLVADLLPNIRVMKFFGHFVFNYYDDNSSKYLHKIF. Residues 44–64 form a helical membrane-spanning segment; it reads CCVNLFLLLLQFALCAVNLII. At 65 to 73 the chain is on the extracellular side; the sequence is ESADVDDLT. Residues 74-94 traverse the membrane as a helical segment; it reads ANTITLLFFTHSIVKIIYFAV. Residues 95-133 lie on the Cytoplasmic side of the membrane; it reads RSKYFYRTWAIWNNPNSHPLFAESNARYHAIALKKMRLL. The helical transmembrane segment at 134–154 threads the bilayer; the sequence is LFLVGATTVLSAIAWTVLTFF. Topologically, residues 155-190 are extracellular; sequence EHPIRKLVDPVTNETTIIELPQLLLRSYYPFDASKG. Residue N167 is glycosylated (N-linked (GlcNAc...) asparagine). Residues 191–211 traverse the membrane as a helical segment; the sequence is IMHVIVLIYQFYWVLFMLIDA. Residues 212 to 350 are Cytoplasmic-facing; the sequence is NSLDVLFCSW…IVRLVTAVGD (139 aa). The tract at residues 261–280 is disordered; sequence SAEHLRESENQPPPPVPPQG. A helical transmembrane segment spans residues 351-371; sequence AYGFALLLHMLTTTITLTLLA. Topologically, residues 372-383 are extracellular; sequence YQATKVNGVNVY. Residues 384–404 form a helical membrane-spanning segment; sequence AASTIGYIIYTFGQVFLFCIF. Residues 405–455 lie on the Cytoplasmic side of the membrane; the sequence is GNRLIEESTSVMEAAYSCHWYDGSEEAKTFVQIVCQQCQKAMSISGAKFFT. Residues 456 to 476 form a helical membrane-spanning segment; it reads VSLDLFASVLGAVVTYFMVLV. Residues 477–479 are Extracellular-facing; the sequence is QLK.

This sequence belongs to the insect chemoreceptor superfamily. Heteromeric odorant receptor channel (TC 1.A.69) family. Orco subfamily. As to quaternary structure, heterodimer with conventional odorant receptors (ORs).

The protein resides in the cell membrane. Its function is as follows. Odorant coreceptor which complexes with conventional odorant receptors (ORs) to form odorant-sensing units, providing sensitive and prolonged odorant signaling and calcium permeability. Obligate coreceptor of all odorant receptors. Orco is a universal and integral part of the functional odorant receptor, involved in the dendritic localization of other olfactory receptors. Can form functional ion channels in the absence of an odor-binding odorant receptor. Plays a central role in the perception of olfactory stimuli in ants and is essential for ant social organization. Required for pheromone sensing and mating behavior. Also required for the development and maintenance of odorant receptor neurons (ORNs) and of antennal lobe glomeruli. The protein is Odorant receptor coreceptor of Harpegnathos saltator (Jerdon's jumping ant).